A 796-amino-acid polypeptide reads, in one-letter code: Conidiophore development regulator abaA (796 aa).

The TEA DNA-binding region spans 133-207; that stretch reads GKDGEPVWSD…QVLDSFLKGD (75 aa). Positions 215–254 are disordered; it reads REQSDRSTAQTQPVGPRWRTSMDHLPSSHYGTHATSSYPE. Over residues 243 to 252 the composition is skewed to polar residues; that stretch reads HYGTHATSSY. The leucine-zipper-like stretch occupies residues 341 to 362; it reads LSDVNDPLNCEIILLETNLELM. The disordered stretch occupies residues 612-643; sequence EGLSDKTAPTSVLDPFPNLTQQTTSQTAGINV. Over residues 629–643 the composition is skewed to polar residues; sequence NLTQQTTSQTAGINV.

The protein belongs to the TEC1 family.

The protein resides in the nucleus. In terms of biological role, brlA, abaA and wetA are pivotal regulators of conidiophore development and conidium maturation. They act individually and together to regulate their own expression and that of numerous other sporulation-specific gene. Controls temporal and spatial specificity in Aspergillus development. Directs the differentiation of phialides and is continuously required for maintenance of their function. Expression of abaA leads to activation of brlA and wetA, cessation of vegetative growth, and accentuated cellular vacuolization. Binds to the sequence 5'-CATTCY-3', where Y is a pyrimidine, making both major- and minor-groove contacts. Multiple abaA binding sites are present in the cis-acting regulatory regions of several developmentally controlled structural genes as well as those of the upstream regulatory gene brlA, the downstream regulatory gene wetA, and abaA itself. The polypeptide is Conidiophore development regulator abaA (Emericella nidulans (strain FGSC A4 / ATCC 38163 / CBS 112.46 / NRRL 194 / M139) (Aspergillus nidulans)).